Reading from the N-terminus, the 401-residue chain is Probable aspartate/prephenate aminotransferase (401 aa).

Gly39, Trp125, and Asn175 together coordinate L-aspartate. Lys239 is subject to N6-(pyridoxal phosphate)lysine. Residue Arg375 coordinates L-aspartate.

Belongs to the class-I pyridoxal-phosphate-dependent aminotransferase family. As to quaternary structure, homodimer. It depends on pyridoxal 5'-phosphate as a cofactor.

The protein localises to the cytoplasm. The catalysed reaction is L-aspartate + 2-oxoglutarate = oxaloacetate + L-glutamate. It catalyses the reaction L-arogenate + 2-oxoglutarate = prephenate + L-glutamate. In terms of biological role, catalyzes the reversible conversion of aspartate and 2-oxoglutarate to glutamate and oxaloacetate. Can also transaminate prephenate in the presence of glutamate. The sequence is that of Probable aspartate/prephenate aminotransferase (aatA) from Rickettsia conorii (strain ATCC VR-613 / Malish 7).